The chain runs to 867 residues: Alanine--tRNA ligase (867 aa).

Zn(2+)-binding residues include His559, His563, Cys661, and His665.

The protein belongs to the class-II aminoacyl-tRNA synthetase family. It depends on Zn(2+) as a cofactor.

Its subcellular location is the cytoplasm. It catalyses the reaction tRNA(Ala) + L-alanine + ATP = L-alanyl-tRNA(Ala) + AMP + diphosphate. In terms of biological role, catalyzes the attachment of alanine to tRNA(Ala) in a two-step reaction: alanine is first activated by ATP to form Ala-AMP and then transferred to the acceptor end of tRNA(Ala). Also edits incorrectly charged Ser-tRNA(Ala) and Gly-tRNA(Ala) via its editing domain. The chain is Alanine--tRNA ligase from Aquifex aeolicus (strain VF5).